Here is a 176-residue protein sequence, read N- to C-terminus: Lipoprotein signal peptidase (176 aa).

The next 3 membrane-spanning stretches (helical) occupy residues 12–32, 67–87, and 94–114; these read WYWV…WVLT, WQKW…TIWL, and VWRL…NLID. Residues Asp-123 and Asp-141 contribute to the active site. A helical transmembrane segment spans residues 133 to 153; it reads HFAAFNIADSAICIGAGLIIL.

It belongs to the peptidase A8 family.

It localises to the cell inner membrane. The catalysed reaction is Release of signal peptides from bacterial membrane prolipoproteins. Hydrolyzes -Xaa-Yaa-Zaa-|-(S,diacylglyceryl)Cys-, in which Xaa is hydrophobic (preferably Leu), and Yaa (Ala or Ser) and Zaa (Gly or Ala) have small, neutral side chains.. The protein operates within protein modification; lipoprotein biosynthesis (signal peptide cleavage). Its function is as follows. This protein specifically catalyzes the removal of signal peptides from prolipoproteins. In Shewanella sediminis (strain HAW-EB3), this protein is Lipoprotein signal peptidase.